Here is a 360-residue protein sequence, read N- to C-terminus: Photosystem II protein D1 (360 aa).

The next 3 helical transmembrane spans lie at 29–46 (YIGWFGVLMIPTLLTATS), 118–133 (HFLTGVACYIGREWEL), and 142–156 (WISVAFTAPVAAAAA). His118 provides a ligand contact to chlorophyll a. A pheophytin a-binding site is contributed by Tyr126. [CaMn4O5] cluster contacts are provided by Asp170 and Glu189. Residues 197–218 (FHQLGVAGVFGGSLFSAMHGSL) form a helical membrane-spanning segment. His198 contributes to the chlorophyll a binding site. A quinone contacts are provided by residues His215 and 264-265 (SF). His215 lines the Fe cation pocket. Residue His272 participates in Fe cation binding. The helical transmembrane segment at 274-288 (FLGLWPVVGIWLTAL) threads the bilayer. [CaMn4O5] cluster is bound by residues His332, Glu333, Asp342, and Ala344. A propeptide spanning residues 345 to 360 (SGESLPVALTAPAVNG) is cleaved from the precursor.

This sequence belongs to the reaction center PufL/M/PsbA/D family. As to quaternary structure, PSII is composed of 1 copy each of membrane proteins PsbA, PsbB, PsbC, PsbD, PsbE, PsbF, PsbH, PsbI, PsbJ, PsbK, PsbL, PsbM, PsbT, PsbX, PsbY, PsbZ, Psb30/Ycf12, at least 3 peripheral proteins of the oxygen-evolving complex and a large number of cofactors. It forms dimeric complexes. Requires The D1/D2 heterodimer binds P680, chlorophylls that are the primary electron donor of PSII, and subsequent electron acceptors. It shares a non-heme iron and each subunit binds pheophytin, quinone, additional chlorophylls, carotenoids and lipids. D1 provides most of the ligands for the Mn4-Ca-O5 cluster of the oxygen-evolving complex (OEC). There is also a Cl(-1) ion associated with D1 and D2, which is required for oxygen evolution. The PSII complex binds additional chlorophylls, carotenoids and specific lipids. as cofactor. Post-translationally, tyr-161 forms a radical intermediate that is referred to as redox-active TyrZ, YZ or Y-Z. In terms of processing, C-terminally processed by CTPA; processing is essential to allow assembly of the oxygen-evolving complex and thus photosynthetic growth.

The protein resides in the plastid. It localises to the chloroplast thylakoid membrane. It catalyses the reaction 2 a plastoquinone + 4 hnu + 2 H2O = 2 a plastoquinol + O2. Its function is as follows. Photosystem II (PSII) is a light-driven water:plastoquinone oxidoreductase that uses light energy to abstract electrons from H(2)O, generating O(2) and a proton gradient subsequently used for ATP formation. It consists of a core antenna complex that captures photons, and an electron transfer chain that converts photonic excitation into a charge separation. The D1/D2 (PsbA/PsbD) reaction center heterodimer binds P680, the primary electron donor of PSII as well as several subsequent electron acceptors. In Pyropia yezoensis (Susabi-nori), this protein is Photosystem II protein D1.